The primary structure comprises 198 residues: FMN-dependent NADH:quinone oxidoreductase (198 aa).

Ser10 serves as a coordination point for FMN.

It belongs to the azoreductase type 1 family. As to quaternary structure, homodimer. Requires FMN as cofactor.

The catalysed reaction is 2 a quinone + NADH + H(+) = 2 a 1,4-benzosemiquinone + NAD(+). It carries out the reaction N,N-dimethyl-1,4-phenylenediamine + anthranilate + 2 NAD(+) = 2-(4-dimethylaminophenyl)diazenylbenzoate + 2 NADH + 2 H(+). In terms of biological role, quinone reductase that provides resistance to thiol-specific stress caused by electrophilic quinones. Functionally, also exhibits azoreductase activity. Catalyzes the reductive cleavage of the azo bond in aromatic azo compounds to the corresponding amines. The protein is FMN-dependent NADH:quinone oxidoreductase of Paraburkholderia phymatum (strain DSM 17167 / CIP 108236 / LMG 21445 / STM815) (Burkholderia phymatum).